A 274-amino-acid polypeptide reads, in one-letter code: tRNA-cytidine(32) 2-sulfurtransferase (274 aa).

The PP-loop motif motif lies at 40–45 (SGGKDS). Positions 115, 118, and 206 each coordinate [4Fe-4S] cluster.

The protein belongs to the TtcA family. Homodimer. Mg(2+) serves as cofactor. The cofactor is [4Fe-4S] cluster.

It is found in the cytoplasm. The catalysed reaction is cytidine(32) in tRNA + S-sulfanyl-L-cysteinyl-[cysteine desulfurase] + AH2 + ATP = 2-thiocytidine(32) in tRNA + L-cysteinyl-[cysteine desulfurase] + A + AMP + diphosphate + H(+). The protein operates within tRNA modification. In terms of biological role, catalyzes the ATP-dependent 2-thiolation of cytidine in position 32 of tRNA, to form 2-thiocytidine (s(2)C32). The sulfur atoms are provided by the cysteine/cysteine desulfurase (IscS) system. This chain is tRNA-cytidine(32) 2-sulfurtransferase, found in Pseudomonas aeruginosa (strain LESB58).